A 561-amino-acid chain; its full sequence is Potassium-transporting ATPase potassium-binding subunit (561 aa).

The next 12 helical transmembrane spans lie at 2–22 (GLGLLQIGLTLCIVIAITPVL), 65–85 (YIRAILYTNLFMGILVYSLIH), 135–155 (ALGFLMFTSAATGLAVGIAFI), 177–197 (ILLPISVIGAIALVLLGVPQT), 253–273 (FIETIAMIAIPAAMIYTYGVF), 280–300 (AWLLFWMVFIVFVILVWVAAT), 327–347 (FGWAETALWAVMTTATMCGAV), 353–373 (ALMPQGLFATLFNLFLQIIWG), 378–398 (GTAYLFIYLILTVFLTGLMVG), 413–433 (IVLASLILLVHPIVVLIPSAI), 482–502 (LSTSLSILVGRYVPIIAMLLL), and 531–551 (AGIVLILGVLTFFPVLALGPI).

The protein belongs to the KdpA family. The system is composed of three essential subunits: KdpA, KdpB and KdpC.

The protein localises to the cell membrane. Its function is as follows. Part of the high-affinity ATP-driven potassium transport (or Kdp) system, which catalyzes the hydrolysis of ATP coupled with the electrogenic transport of potassium into the cytoplasm. This subunit binds the extracellular potassium ions and delivers the ions to the membrane domain of KdpB through an intramembrane tunnel. In Anabaena sp. (strain L31), this protein is Potassium-transporting ATPase potassium-binding subunit.